The chain runs to 465 residues: Neuromedin-K receptor (465 aa).

At 1–84 (MATLPAAETW…TNQFVQPSWR (84 aa)) the chain is on the extracellular side. 3 N-linked (GlcNAc...) asparagine glycosylation sites follow: Asn-23, Asn-50, and Asn-73. Residues 85 to 107 (IALWSLAYGVVVAVAVLGNLIVI) traverse the membrane as a helical segment. Topologically, residues 108-117 (WIILAHKRMR) are cytoplasmic. A helical transmembrane segment spans residues 118-139 (TVTNYFLVNLAFSDASMAAFNT). At 140–159 (LVNFIYALHSEWYFGANYCR) the chain is on the extracellular side. Cys-158 and Cys-233 are joined by a disulfide. The chain crosses the membrane as a helical span at residues 160–181 (FQNFFPITAVFASIYSMTAIAV). The Cytoplasmic portion of the chain corresponds to 182 to 201 (DRYMAIIDPLKPRLSATATK). Residues 202-222 (IVIGSIWILAFLLAFPQCLYS) form a helical membrane-spanning segment. Residues 223-245 (KTKVMPGRTLCFVQWPEGPKQHF) are Extracellular-facing. The helical transmembrane segment at 246-270 (TYHIIVIILVYCFPLLIMGITYTIV) threads the bilayer. Residues 271–299 (GITLWGGEIPGDTCDKYHEQLKAKRKVVK) are Cytoplasmic-facing. A helical membrane pass occupies residues 300 to 321 (MMIIVVMTFAICWLPYHIYFIL). Topologically, residues 322–334 (TAIYQQLNRWKYI) are extracellular. The helical transmembrane segment at 335-359 (QQVYLASFWLAMSSTMYNPIIYCCL) threads the bilayer. Residues 360–465 (NKRFRAGFKR…SPYTSVDEYS (106 aa)) are Cytoplasmic-facing. Residue Cys-374 is the site of S-palmitoyl cysteine attachment. The disordered stretch occupies residues 415-465 (PNDADTTRSSRKKRATPRDPSFNGCSRRNSKSASATSSFISSPYTSVDEYS). A compositionally biased stretch (low complexity) spans 445 to 465 (KSASATSSFISSPYTSVDEYS).

Belongs to the G-protein coupled receptor 1 family. The anchoring of this receptor to the plasma membrane is probably mediated by the palmitoylation of a cysteine residue.

Its subcellular location is the cell membrane. In terms of biological role, this is a receptor for the tachykinin neuropeptide neuromedin-K (neurokinin B). It is associated with G proteins that activate a phosphatidylinositol-calcium second messenger system. The rank order of affinity of this receptor to tachykinins is: neuromedin-K &gt; substance K &gt; substance P. The protein is Neuromedin-K receptor (TACR3) of Homo sapiens (Human).